Here is a 127-residue protein sequence, read N- to C-terminus: Aspartate 1-decarboxylase (127 aa).

S25 serves as the catalytic Schiff-base intermediate with substrate; via pyruvic acid. S25 is modified (pyruvic acid (Ser)). T57 contacts substrate. Y58 acts as the Proton donor in catalysis. A substrate-binding site is contributed by 73–75 (GAA).

This sequence belongs to the PanD family. As to quaternary structure, heterooctamer of four alpha and four beta subunits. Pyruvate is required as a cofactor. Is synthesized initially as an inactive proenzyme, which is activated by self-cleavage at a specific serine bond to produce a beta-subunit with a hydroxyl group at its C-terminus and an alpha-subunit with a pyruvoyl group at its N-terminus.

The protein resides in the cytoplasm. It carries out the reaction L-aspartate + H(+) = beta-alanine + CO2. It participates in cofactor biosynthesis; (R)-pantothenate biosynthesis; beta-alanine from L-aspartate: step 1/1. Catalyzes the pyruvoyl-dependent decarboxylation of aspartate to produce beta-alanine. The chain is Aspartate 1-decarboxylase from Staphylococcus aureus (strain bovine RF122 / ET3-1).